Here is a 240-residue protein sequence, read N- to C-terminus: MORN repeat-containing protein 3 (240 aa).

Positions 6-35 (CPKKSESLWKGWDRKAQRNGLRSQVYAVNG) are interaction with MDM2. MORN repeat units lie at residues 38–60 (YVGE…KKGA), 62–84 (YEGD…DQQT), 91–113 (YSGW…PKEY), 114–136 (YEGD…NGDI), 137–159 (YEGQ…NGNR), 160–182 (YEGC…DHGQ), and 184–205 (FEGF…GRDE). The interval 76–100 (TLSLPDQQTGKCRRVYSGWWKGDKK) is interaction with SIRT1. The interval 206 to 240 (APEPTQFPIPEVKILDPDGVLAEALAMFRKTEEGD) is interaction with TP53.

In terms of assembly, interacts with MEIG1. Interacts with TP53, MDM2 and SIRT1; the interactions mediate post-transcriptional modifications of TP53 by MDM2 and SIRT1.

The protein localises to the cytoplasmic vesicle. It localises to the secretory vesicle. Its subcellular location is the acrosome. In terms of biological role, assembles a suppression complex (suppresome) by tethering SIRT1 and MDM2 to regulate composite modifications of p53/TP53. Confers both deacetylation-mediated functional inactivation, by SIRT1, and ubiquitination-dependent degradation, by MDM2, of p53/TP53, promoting a proliferative and cell survival behaviors. May play a role in the regulation of spermatogenesis. This is MORN repeat-containing protein 3 from Homo sapiens (Human).